We begin with the raw amino-acid sequence, 159 residues long: Phospholipase A2 AP-PLA2-I (159 aa).

An N-terminal signal peptide occupies residues 1 to 19; that stretch reads MNFLVVIVTTVSLAGAASA. Positions 20–23 are excised as a propeptide; it reads GEIQ. Disulfide bonds link cysteine 51-cysteine 159, cysteine 53-cysteine 69, cysteine 68-cysteine 139, cysteine 75-cysteine 132, cysteine 85-cysteine 125, and cysteine 110-cysteine 130. Ca(2+)-binding residues include tyrosine 52, glycine 54, and glycine 56. Residue histidine 72 is part of the active site. Aspartate 73 is a Ca(2+) binding site. Residue aspartate 133 is part of the active site.

This sequence belongs to the phospholipase A2 family. Group I subfamily. As to quaternary structure, homodimer. Ca(2+) serves as cofactor. As to expression, expressed by the venom gland.

The protein localises to the secreted. The catalysed reaction is a 1,2-diacyl-sn-glycero-3-phosphocholine + H2O = a 1-acyl-sn-glycero-3-phosphocholine + a fatty acid + H(+). Starfish phospholipase A2 (PLA2) that has hemorrhagic and capillary permeability-increasing activities and hence is considered to be deeply involved in the local inflammation. Shows hemolytic activity only in the presence of phosphatidylcholine (PC). PLA2 catalyzes the calcium-dependent hydrolysis of the 2-acyl groups in 3-sn-phosphoglycerides. The polypeptide is Phospholipase A2 AP-PLA2-I (Acanthaster planci (Crown-of-thorns starfish)).